A 366-amino-acid chain; its full sequence is Cobalt-precorrin-5B C(1)-methyltransferase (366 aa).

This sequence belongs to the CbiD family.

It catalyses the reaction Co-precorrin-5B + S-adenosyl-L-methionine = Co-precorrin-6A + S-adenosyl-L-homocysteine. It participates in cofactor biosynthesis; adenosylcobalamin biosynthesis; cob(II)yrinate a,c-diamide from sirohydrochlorin (anaerobic route): step 6/10. Its function is as follows. Catalyzes the methylation of C-1 in cobalt-precorrin-5B to form cobalt-precorrin-6A. This chain is Cobalt-precorrin-5B C(1)-methyltransferase, found in Thermoanaerobacter sp. (strain X514).